The chain runs to 161 residues: uncharacterized protein (161 aa).

Residues cysteine 72–arginine 134 form an RING-type zinc finger. Positions aspartate 140 to glycine 161 are disordered.

This is an uncharacterized protein from Caenorhabditis elegans.